A 50-amino-acid chain; its full sequence is Ornatin-E (50 aa).

The Cell attachment site signature appears at 42 to 44 (RGD).

This sequence belongs to the ornatin family.

It localises to the secreted. Potent inhibitor of fibrinogen interaction with platelet receptors expressed on glycoprotein IIb-IIIa complex. May prevent blood from clotting during either feeding and/or storage of ingested blood. This is Ornatin-E from Placobdella ornata (Turtle leech).